Consider the following 195-residue polypeptide: MARYIGPKTKISRKFGELIYGKTNKSFEKKKYPPGNSSSRNIKKTFYSTQLLEKQKIKYTYGILERQFLKMFYKASKKKGIKGEILLQLCESRLDNIVYRLNLSHSRPEARQLVSHRHITVNGKIVNIPSFNLKPGDKISLKEKHKHKANKNKLLGSDWLSWDNEKMIGIFKYIPNRNQITENINEKLIVELYSK.

The S4 RNA-binding domain occupies 92-152; that stretch reads SRLDNIVYRL…EKHKHKANKN (61 aa).

The protein belongs to the universal ribosomal protein uS4 family. As to quaternary structure, part of the 30S ribosomal subunit. Contacts protein S5. The interaction surface between S4 and S5 is involved in control of translational fidelity.

In terms of biological role, one of the primary rRNA binding proteins, it binds directly to 16S rRNA where it nucleates assembly of the body of the 30S subunit. With S5 and S12 plays an important role in translational accuracy. The sequence is that of Small ribosomal subunit protein uS4 from Karelsulcia muelleri (strain GWSS) (Sulcia muelleri).